A 619-amino-acid chain; its full sequence is Chaperone protein HscA homolog (619 aa).

The protein belongs to the heat shock protein 70 family.

Functionally, chaperone involved in the maturation of iron-sulfur cluster-containing proteins. Has a low intrinsic ATPase activity which is markedly stimulated by HscB. The protein is Chaperone protein HscA homolog of Pseudomonas aeruginosa (strain LESB58).